The following is a 448-amino-acid chain: Probable glycine dehydrogenase (decarboxylating) subunit 1 (448 aa).

This sequence belongs to the GcvP family. N-terminal subunit subfamily. The glycine cleavage system is composed of four proteins: P, T, L and H. In this organism, the P 'protein' is a heterodimer of two subunits.

It catalyses the reaction N(6)-[(R)-lipoyl]-L-lysyl-[glycine-cleavage complex H protein] + glycine + H(+) = N(6)-[(R)-S(8)-aminomethyldihydrolipoyl]-L-lysyl-[glycine-cleavage complex H protein] + CO2. The glycine cleavage system catalyzes the degradation of glycine. The P protein binds the alpha-amino group of glycine through its pyridoxal phosphate cofactor; CO(2) is released and the remaining methylamine moiety is then transferred to the lipoamide cofactor of the H protein. The chain is Probable glycine dehydrogenase (decarboxylating) subunit 1 from Listeria monocytogenes serovar 1/2a (strain ATCC BAA-679 / EGD-e).